We begin with the raw amino-acid sequence, 221 residues long: Octanoyltransferase (221 aa).

The BPL/LPL catalytic domain maps to 35–221; the sequence is ESYENRIIFC…RELLAALLSK (187 aa). Residues 80–87, 152–154, and 165–167 each bind substrate; these read RGGDITYH, AIG, and GLA. The Acyl-thioester intermediate role is filled by C183.

The protein belongs to the LipB family.

The protein resides in the cytoplasm. It catalyses the reaction octanoyl-[ACP] + L-lysyl-[protein] = N(6)-octanoyl-L-lysyl-[protein] + holo-[ACP] + H(+). It functions in the pathway protein modification; protein lipoylation via endogenous pathway; protein N(6)-(lipoyl)lysine from octanoyl-[acyl-carrier-protein]: step 1/2. Functionally, catalyzes the transfer of endogenously produced octanoic acid from octanoyl-acyl-carrier-protein onto the lipoyl domains of lipoate-dependent enzymes. Lipoyl-ACP can also act as a substrate although octanoyl-ACP is likely to be the physiological substrate. In Bacteroides fragilis (strain ATCC 25285 / DSM 2151 / CCUG 4856 / JCM 11019 / LMG 10263 / NCTC 9343 / Onslow / VPI 2553 / EN-2), this protein is Octanoyltransferase.